A 325-amino-acid polypeptide reads, in one-letter code: Peroxidase RIP1 (325 aa).

Residues methionine 1–serine 21 form the signal peptide. Cystine bridges form between cysteine 38-cysteine 118, cysteine 71-cysteine 76, cysteine 125-cysteine 321, and cysteine 206-cysteine 231. Histidine 69 acts as the Proton acceptor in catalysis. Residues aspartate 70, valine 73, glycine 75, aspartate 77, and serine 79 each contribute to the Ca(2+) site. Asparagine 87 carries N-linked (GlcNAc...) asparagine glycosylation. Proline 169 lines the substrate pocket. A glycan (N-linked (GlcNAc...) asparagine) is linked at asparagine 174. Histidine 199 contributes to the heme b binding site. Threonine 200 is a Ca(2+) binding site. Asparagine 215 carries N-linked (GlcNAc...) asparagine glycosylation. 3 residues coordinate Ca(2+): aspartate 244, threonine 246, and glutamate 251.

Belongs to the peroxidase family. Classical plant (class III) peroxidase subfamily. Requires heme b as cofactor. It depends on Ca(2+) as a cofactor. Expressed in the differentiating root epidermis following inoculation with the bacterial symbiont Sinorhizobium meliloti.

The protein resides in the secreted. It carries out the reaction 2 a phenolic donor + H2O2 = 2 a phenolic radical donor + 2 H2O. Its function is as follows. Removal of H(2)O(2), oxidation of toxic reductants, biosynthesis and degradation of lignin, suberization, auxin catabolism, response to environmental stresses such as wounding, pathogen attack and oxidative stress. These functions might be dependent on each isozyme/isoform in each plant tissue. The polypeptide is Peroxidase RIP1 (Medicago truncatula (Barrel medic)).